The primary structure comprises 589 residues: Probable translation initiation factor IF-2 (589 aa).

In terms of domain architecture, tr-type G spans 14-229 (LRQPIVCVLG…LAGLAQRFLE (216 aa)). The segment at 23–30 (GHVDHGKT) is G1. A GTP-binding site is contributed by 23 to 30 (GHVDHGKT). Residues 48–52 (GITQR) are G2. A G3 region spans residues 84-87 (DTPG). GTP is bound by residues 84-88 (DTPGH) and 138-141 (NKID). The segment at 138–141 (NKID) is G4. Positions 206-208 (SAK) are G5.

Belongs to the TRAFAC class translation factor GTPase superfamily. Classic translation factor GTPase family. IF-2 subfamily.

In terms of biological role, function in general translation initiation by promoting the binding of the formylmethionine-tRNA to ribosomes. Seems to function along with eIF-2. This chain is Probable translation initiation factor IF-2 (infB), found in Thermoplasma acidophilum (strain ATCC 25905 / DSM 1728 / JCM 9062 / NBRC 15155 / AMRC-C165).